The sequence spans 367 residues: 3-isopropylmalate dehydrogenase (367 aa).

75-88 (GPKWDGIERSKRPE) contributes to the NAD(+) binding site. Substrate is bound by residues R95, R105, R133, and D230. Mg(2+) is bound by residues D230, D254, and D258. Residue 288 to 300 (GSAPDIAGQDIAN) participates in NAD(+) binding.

The protein belongs to the isocitrate and isopropylmalate dehydrogenases family. LeuB type 1 subfamily. Homodimer. Mg(2+) is required as a cofactor. The cofactor is Mn(2+).

Its subcellular location is the cytoplasm. It carries out the reaction (2R,3S)-3-isopropylmalate + NAD(+) = 4-methyl-2-oxopentanoate + CO2 + NADH. The protein operates within amino-acid biosynthesis; L-leucine biosynthesis; L-leucine from 3-methyl-2-oxobutanoate: step 3/4. Catalyzes the oxidation of 3-carboxy-2-hydroxy-4-methylpentanoate (3-isopropylmalate) to 3-carboxy-4-methyl-2-oxopentanoate. The product decarboxylates to 4-methyl-2 oxopentanoate. This is 3-isopropylmalate dehydrogenase from Psychrobacter cryohalolentis (strain ATCC BAA-1226 / DSM 17306 / VKM B-2378 / K5).